The chain runs to 292 residues: NAD kinase (292 aa).

The active-site Proton acceptor is the Asp73. Residues 73 to 74, 147 to 148, His158, Arg175, Asp177, 188 to 193, and Gln247 each bind NAD(+); these read DG, NE, and TAYSLS.

The protein belongs to the NAD kinase family. Requires a divalent metal cation as cofactor.

It is found in the cytoplasm. The enzyme catalyses NAD(+) + ATP = ADP + NADP(+) + H(+). Functionally, involved in the regulation of the intracellular balance of NAD and NADP, and is a key enzyme in the biosynthesis of NADP. Catalyzes specifically the phosphorylation on 2'-hydroxyl of the adenosine moiety of NAD to yield NADP. This Enterobacter sp. (strain 638) protein is NAD kinase.